Reading from the N-terminus, the 617-residue chain is Dihydroxy-acid dehydratase (617 aa).

Aspartate 81 contacts Mg(2+). Residue cysteine 122 coordinates [2Fe-2S] cluster. Residues aspartate 123 and lysine 124 each coordinate Mg(2+). Lysine 124 carries the N6-carboxylysine modification. Cysteine 195 contacts [2Fe-2S] cluster. Glutamate 491 lines the Mg(2+) pocket. Residue serine 517 is the Proton acceptor of the active site.

It belongs to the IlvD/Edd family. In terms of assembly, homodimer. [2Fe-2S] cluster is required as a cofactor. Requires Mg(2+) as cofactor.

The catalysed reaction is (2R)-2,3-dihydroxy-3-methylbutanoate = 3-methyl-2-oxobutanoate + H2O. It catalyses the reaction (2R,3R)-2,3-dihydroxy-3-methylpentanoate = (S)-3-methyl-2-oxopentanoate + H2O. The protein operates within amino-acid biosynthesis; L-isoleucine biosynthesis; L-isoleucine from 2-oxobutanoate: step 3/4. Its pathway is amino-acid biosynthesis; L-valine biosynthesis; L-valine from pyruvate: step 3/4. Functionally, functions in the biosynthesis of branched-chain amino acids. Catalyzes the dehydration of (2R,3R)-2,3-dihydroxy-3-methylpentanoate (2,3-dihydroxy-3-methylvalerate) into 2-oxo-3-methylpentanoate (2-oxo-3-methylvalerate) and of (2R)-2,3-dihydroxy-3-methylbutanoate (2,3-dihydroxyisovalerate) into 2-oxo-3-methylbutanoate (2-oxoisovalerate), the penultimate precursor to L-isoleucine and L-valine, respectively. This is Dihydroxy-acid dehydratase from Buchnera aphidicola subsp. Diuraphis noxia.